A 197-amino-acid polypeptide reads, in one-letter code: dITP/XTP pyrophosphatase (197 aa).

Substrate is bound at residue Thr-8–Lys-13. Residues Glu-40 and Asp-69 each contribute to the Mg(2+) site. Residue Asp-69 is the Proton acceptor of the active site. Substrate is bound by residues Ser-70, Phe-154 to Asp-157, Lys-177, and His-182 to Arg-183.

Belongs to the HAM1 NTPase family. As to quaternary structure, homodimer. Requires Mg(2+) as cofactor.

The catalysed reaction is XTP + H2O = XMP + diphosphate + H(+). It carries out the reaction dITP + H2O = dIMP + diphosphate + H(+). It catalyses the reaction ITP + H2O = IMP + diphosphate + H(+). Functionally, pyrophosphatase that catalyzes the hydrolysis of nucleoside triphosphates to their monophosphate derivatives, with a high preference for the non-canonical purine nucleotides XTP (xanthosine triphosphate), dITP (deoxyinosine triphosphate) and ITP. Seems to function as a house-cleaning enzyme that removes non-canonical purine nucleotides from the nucleotide pool, thus preventing their incorporation into DNA/RNA and avoiding chromosomal lesions. This is dITP/XTP pyrophosphatase (rdgB) from Escherichia coli O157:H7.